A 511-amino-acid chain; its full sequence is Histidine ammonia-lyase (511 aa).

Positions 142–144 (ASG) form a cross-link, 5-imidazolinone (Ala-Gly). Residue Ser143 is modified to 2,3-didehydroalanine (Ser).

The protein belongs to the PAL/histidase family. Contains an active site 4-methylidene-imidazol-5-one (MIO), which is formed autocatalytically by cyclization and dehydration of residues Ala-Ser-Gly.

It localises to the cytoplasm. The catalysed reaction is L-histidine = trans-urocanate + NH4(+). It functions in the pathway amino-acid degradation; L-histidine degradation into L-glutamate; N-formimidoyl-L-glutamate from L-histidine: step 1/3. In Brucella ovis (strain ATCC 25840 / 63/290 / NCTC 10512), this protein is Histidine ammonia-lyase.